A 595-amino-acid polypeptide reads, in one-letter code: NADH-quinone oxidoreductase subunit C/D (595 aa).

Positions 1 to 185 (MNKNICLSAS…NPFVLTKEKE (185 aa)) are NADH dehydrogenase I subunit C. An NADH dehydrogenase I subunit D region spans residues 209–595 (DFMFLNFGPN…IDFVMSDVDR (387 aa)).

It in the N-terminal section; belongs to the complex I 30 kDa subunit family. In the C-terminal section; belongs to the complex I 49 kDa subunit family. As to quaternary structure, NDH-1 is composed of 13 different subunits. Subunits NuoB, CD, E, F, and G constitute the peripheral sector of the complex.

The protein localises to the cell inner membrane. It carries out the reaction a quinone + NADH + 5 H(+)(in) = a quinol + NAD(+) + 4 H(+)(out). In terms of biological role, NDH-1 shuttles electrons from NADH, via FMN and iron-sulfur (Fe-S) centers, to quinones in the respiratory chain. The immediate electron acceptor for the enzyme in this species is believed to be ubiquinone. Couples the redox reaction to proton translocation (for every two electrons transferred, four hydrogen ions are translocated across the cytoplasmic membrane), and thus conserves the redox energy in a proton gradient. The polypeptide is NADH-quinone oxidoreductase subunit C/D (Baumannia cicadellinicola subsp. Homalodisca coagulata).